Here is a 535-residue protein sequence, read N- to C-terminus: CTP synthase (535 aa).

The interval 1–267 (MTKYIFVTGG…DKLVCEHMKL (267 aa)) is amidoligase domain. S13 serves as a coordination point for CTP. S13 is a binding site for UTP. 14 to 19 (SLGKGI) contacts ATP. Y54 serves as a coordination point for L-glutamine. An ATP-binding site is contributed by D71. Mg(2+) is bound by residues D71 and E141. CTP is bound by residues 148 to 150 (DIE), 188 to 193 (KTKPTQ), and K224. UTP contacts are provided by residues 188 to 193 (KTKPTQ) and K224. The region spanning 292–534 (TIGLVGKYVE…IGASVEAANQ (243 aa)) is the Glutamine amidotransferase type-1 domain. G354 serves as a coordination point for L-glutamine. C381 (nucleophile; for glutamine hydrolysis) is an active-site residue. L-glutamine is bound by residues 382 to 385 (LGMQ), E405, and R462. Active-site residues include H507 and E509.

This sequence belongs to the CTP synthase family. Homotetramer. Interacts with BrxC.

The catalysed reaction is UTP + L-glutamine + ATP + H2O = CTP + L-glutamate + ADP + phosphate + 2 H(+). It carries out the reaction L-glutamine + H2O = L-glutamate + NH4(+). The enzyme catalyses UTP + NH4(+) + ATP = CTP + ADP + phosphate + 2 H(+). It participates in pyrimidine metabolism; CTP biosynthesis via de novo pathway; CTP from UDP: step 2/2. Its activity is regulated as follows. Allosterically activated by GTP, when glutamine is the substrate; GTP has no effect on the reaction when ammonia is the substrate. The allosteric effector GTP functions by stabilizing the protein conformation that binds the tetrahedral intermediate(s) formed during glutamine hydrolysis. Inhibited by the product CTP, via allosteric rather than competitive inhibition. In terms of biological role, catalyzes the ATP-dependent amination of UTP to CTP with either L-glutamine or ammonia as the source of nitrogen. Regulates intracellular CTP levels through interactions with the four ribonucleotide triphosphates. In Bacillus subtilis (strain 168), this protein is CTP synthase.